A 242-amino-acid polypeptide reads, in one-letter code: Type III pantothenate kinase (242 aa).

Residue 7–14 (DLGNSRFK) participates in ATP binding. Residues Y91 and 98–101 (GVDR) contribute to the substrate site. D100 serves as the catalytic Proton acceptor. T121 contributes to the ATP binding site. T171 contacts substrate.

It belongs to the type III pantothenate kinase family. As to quaternary structure, homodimer. It depends on NH4(+) as a cofactor. K(+) serves as cofactor.

The protein localises to the cytoplasm. It carries out the reaction (R)-pantothenate + ATP = (R)-4'-phosphopantothenate + ADP + H(+). It functions in the pathway cofactor biosynthesis; coenzyme A biosynthesis; CoA from (R)-pantothenate: step 1/5. In terms of biological role, catalyzes the phosphorylation of pantothenate (Pan), the first step in CoA biosynthesis. This chain is Type III pantothenate kinase, found in Xanthomonas axonopodis pv. citri (strain 306).